The following is a 526-amino-acid chain: Fumitremorgin C synthase (526 aa).

The helical transmembrane segment at 4 to 24 threads the bilayer; that stretch reads LPLSPAVLFLTITLPILYFWI. Heme is bound at residue cysteine 443.

The protein belongs to the cytochrome P450 family. Requires heme as cofactor.

It localises to the membrane. It catalyses the reaction tryprostatin A + reduced [NADPH--hemoprotein reductase] + O2 = fumitremorgin C + oxidized [NADPH--hemoprotein reductase] + 2 H2O + H(+). Its pathway is mycotoxin biosynthesis. Functionally, cytochrome P450 monooxygenase; part of the gene cluster that mediates the biosynthesis of fumitremorgins, indole alkaloids that carry not only intriguing chemical structures, but also interesting biological and pharmacological activities. The biosynthesis of fumitremorgin-type alkaloids begins by condensation of the two amino acids L-tryptophan and L-proline to brevianamide F, catalyzed by the non-ribosomal peptide synthetase ftmPS/ftmA. Brevianamide F is then prenylated by the prenyltransferase ftmPT1/ftmB in the presence of dimethylallyl diphosphate, resulting in the formation of tryprostatin B. The three cytochrome P450 monooxygenases, ftmP450-1/ftmC, ftmP450-2/ftmE and ftmP450-3/FtmG, are responsible for the conversion of tryprostatin B to 6-hydroxytryprostatin B, tryprostatin A to fumitremorgin C and fumitremorgin C to 12,13-dihydroxyfumitremorgin C, respectively. The putative methyltransferase ftmMT/ftmD is expected for the conversion of 6-hydroxytryprostatin B to tryprostatin A. FtmPT2/FtmH catalyzes the prenylation of 12,13-dihydroxyfumitre-morgin C in the presence of dimethylallyl diphosphate, resulting in the formation of fumitremorgin B. Fumitremorgin B is further converted to verruculogen by ftmOx1/ftmF via the insertion of an endoperoxide bond between the two prenyl moieties. Finally, verruculogen is further converted to fumitremorgin A by the verruculogen prenyltransferase ftmPT3. This Neosartorya fischeri (strain ATCC 1020 / DSM 3700 / CBS 544.65 / FGSC A1164 / JCM 1740 / NRRL 181 / WB 181) (Aspergillus fischerianus) protein is Fumitremorgin C synthase.